The primary structure comprises 229 residues: Uracil-DNA glycosylase (229 aa).

Catalysis depends on Asp65, which acts as the Proton acceptor.

Belongs to the uracil-DNA glycosylase (UDG) superfamily. UNG family.

The protein resides in the cytoplasm. The enzyme catalyses Hydrolyzes single-stranded DNA or mismatched double-stranded DNA and polynucleotides, releasing free uracil.. In terms of biological role, excises uracil residues from the DNA which can arise as a result of misincorporation of dUMP residues by DNA polymerase or due to deamination of cytosine. The chain is Uracil-DNA glycosylase from Limosilactobacillus reuteri (strain DSM 20016) (Lactobacillus reuteri).